The sequence spans 158 residues: Succinate dehydrogenase assembly factor 2, mitochondrial (158 aa).

Residues 1-17 (MFSANIARKVVCSVCRA) constitute a mitochondrion transit peptide.

Belongs to the SDHAF2 family. As to quaternary structure, interacts with sdha within the SDH catalytic dimer.

The protein resides in the mitochondrion matrix. In terms of biological role, plays an essential role in the assembly of succinate dehydrogenase (SDH), an enzyme complex (also referred to as respiratory complex II) that is a component of both the tricarboxylic acid (TCA) cycle and the mitochondrial electron transport chain, and which couples the oxidation of succinate to fumarate with the reduction of ubiquinone (coenzyme Q) to ubiquinol. Required for flavinylation (covalent attachment of FAD) of the flavoprotein subunit sdha of the SDH catalytic dimer. This is Succinate dehydrogenase assembly factor 2, mitochondrial from Danio rerio (Zebrafish).